The sequence spans 184 residues: Tumor necrosis factor alpha-induced protein 8-like protein 2 (184 aa).

Serine 3 bears the Phosphoserine mark.

Belongs to the TNFAIP8 family. TNFAIP8L2 subfamily. In terms of assembly, may interact with CASP8; however, such result is unclear since could not reproduce the interaction with CASP8. Interacts with RAC1. In terms of processing, phosphorylated by TAK1/MAP3K7; this phosphorylation triggers association with BTRC and subsequent ubiquitination and degradation. Ubiquitinated in a BTRC-depdent manner; leading to degradation mediated through the proteasome pathway.

The protein localises to the cytoplasm. It localises to the nucleus. It is found in the lysosome. Its function is as follows. Acts as a negative regulator of innate and adaptive immunity by maintaining immune homeostasis. Plays a regulatory role in the Toll-like signaling pathway by determining the strength of LPS-induced signaling and gene expression. Inhibits TCR-mediated T-cell activation and negatively regulate T-cell function to prevent hyperresponsiveness. Also inhibits autolysosome formation via negatively modulating MTOR activation by interacting with RAC1 and promoting the disassociation of the RAC1-MTOR complex. Plays an essential role in NK-cell biology by acting as a checkpoint and displaying an expression pattern correlating with NK-cell maturation process and by negatively regulating NK-cell maturation and antitumor immunity. Mechanistically, suppresses IL-15-triggered mTOR activity in NK-cells. The sequence is that of Tumor necrosis factor alpha-induced protein 8-like protein 2 (TNFAIP8L2) from Otolemur garnettii (Small-eared galago).